Consider the following 368-residue polypeptide: Agmatine deiminase (368 aa).

Cys-357 serves as the catalytic Amidino-cysteine intermediate.

The protein belongs to the agmatine deiminase family. In terms of assembly, homodimer.

It catalyses the reaction agmatine + H2O = N-carbamoylputrescine + NH4(+). It participates in amine and polyamine biosynthesis; putrescine biosynthesis via agmatine pathway; N-carbamoylputrescine from agmatine: step 1/1. In terms of biological role, mediates the hydrolysis of agmatine into N-carbamoylputrescine in the arginine decarboxylase (ADC) pathway of putrescine biosynthesis, a basic polyamine. This Pseudomonas savastanoi pv. phaseolicola (strain 1448A / Race 6) (Pseudomonas syringae pv. phaseolicola (strain 1448A / Race 6)) protein is Agmatine deiminase.